The following is a 341-amino-acid chain: HTH-type transcriptional repressor PurR (341 aa).

Positions 2-56 (ATIKDVAKRAGVSTTTVSHVINKTRFVADETREAVWVAIKELHYSPSAVARSLKV) constitute an HTH lacI-type domain. A DNA-binding region (H-T-H motif) is located at residues 4-23 (IKDVAKRAGVSTTTVSHVIN). The DNA-binding element occupies 48–56 (SAVARSLKV). Hypoxanthine-binding residues include tyrosine 73, arginine 190, threonine 192, phenylalanine 221, and aspartate 275.

Homodimer.

It functions in the pathway purine metabolism; purine nucleotide biosynthesis [regulation]. Is the main repressor of the genes involved in the de novo synthesis of purine nucleotides, regulating purB, purC, purEK, purF, purHD, purL, purMN and guaBA expression. PurR is allosterically activated to bind its cognate DNA by binding the purine corepressors, hypoxanthine or guanine, thereby effecting transcription repression. The protein is HTH-type transcriptional repressor PurR of Erwinia tasmaniensis (strain DSM 17950 / CFBP 7177 / CIP 109463 / NCPPB 4357 / Et1/99).